The following is a 78-amino-acid chain: Large ribosomal subunit protein eL20 (78 aa).

The protein belongs to the eukaryotic ribosomal protein eL20 family. Part of the 50S ribosomal subunit. Binds 23S rRNA.

The protein is Large ribosomal subunit protein eL20 of Pyrobaculum aerophilum (strain ATCC 51768 / DSM 7523 / JCM 9630 / CIP 104966 / NBRC 100827 / IM2).